The primary structure comprises 484 residues: Calcium uniporter protein, mitochondrial (484 aa).

A mitochondrion-targeting transit peptide spans 1 to 33 (MGHVLGGTLLAANRLARPPAVVLGKPRVCCWRA). Over 34–304 (SPWPVIVSSA…CDLLAHKGAH (271 aa)) the chain is Mitochondrial matrix. Disordered regions lie at residues 59–104 (ARYE…KGRL) and 188–227 (YTGGNKSNDGRREESNGNGSNVASYSGLGREGPSKGDTHW). Residues 61–82 (YEARGRSTTQRKVDDRPWHRES) show a composition bias toward basic and acidic residues. Polar residues predominate over residues 83–93 (SGSLPKSTSPD). A helical membrane pass occupies residues 305–326 (ALAKGGFAALAAWWGIVYYVTF). Residues 327 to 334 (HTDMGWDL) lie on the Mitochondrial intermembrane side of the membrane. The short motif at 332-340 (WDLVEPITY) is the Selectivity filter element. A helical transmembrane segment spans residues 335–355 (VEPITYLAGLASIMGGYLWFL). Residue E336 coordinates Ca(2+). Residues 356–484 (FISRDLSYKA…NEAAANVPGD (129 aa)) are Mitochondrial matrix-facing. Composition is skewed to basic and acidic residues over residues 426–435 (KEVLEEEKGG) and 452–462 (DHDHDHDHVSH). The disordered stretch occupies residues 426–484 (KEVLEEEKGGKARKREQEDEDGDGDDDHDHDHDHVSHGAELQGQDILHANEAAANVPGD).

It belongs to the MCU (TC 1.A.77) family. As to quaternary structure, homotetramer, assembles in a dimer or dimers configuration with two interfaces.

Its subcellular location is the mitochondrion inner membrane. The catalysed reaction is Ca(2+)(in) = Ca(2+)(out). With respect to regulation, inhibited by ruthenium red or its derivative Ru360. In terms of biological role, highly selective calcium channel localized to the inner mitochondrial membrane, which mediates calcium uptake into the mitochondrial matrix. Mitochondrial calcium homeostasis plays key roles in cellular physiology and regulates ATP production, cytoplasmic calcium signals and activation of cell death pathways. Sufficient to operate as a pore-forming channel without the need of calcium-sensor or auxiliary subunit. This chain is Calcium uniporter protein, mitochondrial, found in Metarhizium acridum (strain CQMa 102).